The following is a 233-amino-acid chain: Orotidine 5'-phosphate decarboxylase (233 aa).

Substrate is bound by residues Asp-11, Lys-34, Asp-61 to Thr-70, Thr-117, Arg-179, Gln-188, Gly-208, and Arg-209. Catalysis depends on Lys-63, which acts as the Proton donor.

Belongs to the OMP decarboxylase family. Type 1 subfamily. In terms of assembly, homodimer.

The enzyme catalyses orotidine 5'-phosphate + H(+) = UMP + CO2. The protein operates within pyrimidine metabolism; UMP biosynthesis via de novo pathway; UMP from orotate: step 2/2. In terms of biological role, catalyzes the decarboxylation of orotidine 5'-monophosphate (OMP) to uridine 5'-monophosphate (UMP). The polypeptide is Orotidine 5'-phosphate decarboxylase (Streptococcus pneumoniae (strain JJA)).